We begin with the raw amino-acid sequence, 188 residues long: Peptidyl-tRNA hydrolase (188 aa).

Residue Y14 participates in tRNA binding. The Proton acceptor role is filled by H19. The tRNA site is built by Y64, N66, and N112.

Belongs to the PTH family. Monomer.

Its subcellular location is the cytoplasm. It catalyses the reaction an N-acyl-L-alpha-aminoacyl-tRNA + H2O = an N-acyl-L-amino acid + a tRNA + H(+). Hydrolyzes ribosome-free peptidyl-tRNAs (with 1 or more amino acids incorporated), which drop off the ribosome during protein synthesis, or as a result of ribosome stalling. In terms of biological role, catalyzes the release of premature peptidyl moieties from peptidyl-tRNA molecules trapped in stalled 50S ribosomal subunits, and thus maintains levels of free tRNAs and 50S ribosomes. The chain is Peptidyl-tRNA hydrolase from Leuconostoc mesenteroides subsp. mesenteroides (strain ATCC 8293 / DSM 20343 / BCRC 11652 / CCM 1803 / JCM 6124 / NCDO 523 / NBRC 100496 / NCIMB 8023 / NCTC 12954 / NRRL B-1118 / 37Y).